A 474-amino-acid chain; its full sequence is 3-isopropylmalate dehydratase large subunit (474 aa).

3 residues coordinate [4Fe-4S] cluster: Cys353, Cys414, and Cys417.

Belongs to the aconitase/IPM isomerase family. LeuC type 1 subfamily. As to quaternary structure, heterodimer of LeuC and LeuD. [4Fe-4S] cluster is required as a cofactor.

It catalyses the reaction (2R,3S)-3-isopropylmalate = (2S)-2-isopropylmalate. It participates in amino-acid biosynthesis; L-leucine biosynthesis; L-leucine from 3-methyl-2-oxobutanoate: step 2/4. Catalyzes the isomerization between 2-isopropylmalate and 3-isopropylmalate, via the formation of 2-isopropylmaleate. The polypeptide is 3-isopropylmalate dehydratase large subunit (Teredinibacter turnerae (strain ATCC 39867 / T7901)).